The primary structure comprises 275 residues: Putative ribonuclease-like protein YfkH (275 aa).

Transmembrane regions (helical) follow at residues 23 to 43 (LAYFFLLSLFPFLIFMLTLTA), 83 to 103 (LLSFGIIAALWSASNGMNAIV), 126 to 146 (IFLTIAMVFTILVALLLPVFG), 172 to 192 (WGVSPLVLLIVFSALYVIAPN), 199 to 219 (FVMPGAVFATIGWIIVSTLFS), and 235 to 255 (IGGIIVLMIWFYLSGILIILG).

Its subcellular location is the cell membrane. This chain is Putative ribonuclease-like protein YfkH (yfkH), found in Bacillus subtilis (strain 168).